An 879-amino-acid chain; its full sequence is DNA mismatch repair protein MutS (879 aa).

Residue 639–646 (GPNMGGKS) coordinates ATP.

The protein belongs to the DNA mismatch repair MutS family.

In terms of biological role, this protein is involved in the repair of mismatches in DNA. It is possible that it carries out the mismatch recognition step. This protein has a weak ATPase activity. This is DNA mismatch repair protein MutS from Aromatoleum aromaticum (strain DSM 19018 / LMG 30748 / EbN1) (Azoarcus sp. (strain EbN1)).